Reading from the N-terminus, the 214-residue chain is Pyridoxine/pyridoxamine 5'-phosphate oxidase (214 aa).

Substrate is bound by residues 8-11 (RINY) and Lys66. Residues 61-66 (RIVLIK), 76-77 (FT), Arg82, Lys83, and Gln105 each bind FMN. Substrate-binding residues include Tyr123, Arg127, and Ser131. FMN is bound by residues 140-141 (QS) and Trp184. 190 to 192 (RLH) serves as a coordination point for substrate. Arg194 is a binding site for FMN.

It belongs to the pyridoxamine 5'-phosphate oxidase family. As to quaternary structure, homodimer. FMN is required as a cofactor.

It catalyses the reaction pyridoxamine 5'-phosphate + O2 + H2O = pyridoxal 5'-phosphate + H2O2 + NH4(+). It carries out the reaction pyridoxine 5'-phosphate + O2 = pyridoxal 5'-phosphate + H2O2. It functions in the pathway cofactor metabolism; pyridoxal 5'-phosphate salvage; pyridoxal 5'-phosphate from pyridoxamine 5'-phosphate: step 1/1. It participates in cofactor metabolism; pyridoxal 5'-phosphate salvage; pyridoxal 5'-phosphate from pyridoxine 5'-phosphate: step 1/1. Functionally, catalyzes the oxidation of either pyridoxine 5'-phosphate (PNP) or pyridoxamine 5'-phosphate (PMP) into pyridoxal 5'-phosphate (PLP). The sequence is that of Pyridoxine/pyridoxamine 5'-phosphate oxidase from Burkholderia lata (strain ATCC 17760 / DSM 23089 / LMG 22485 / NCIMB 9086 / R18194 / 383).